The following is a 535-amino-acid chain: Dimethylaniline monooxygenase [N-oxide-forming] 2 (535 aa).

Residue Ala-2 is modified to N-acetylalanine. Residues 9 to 13 (GAGVS), Glu-32, 40 to 41 (LW), and 61 to 62 (NT) each bind FAD. Residues 60–61 (TN) and 195–198 (SAAD) contribute to the NADP(+) site. A Glycyl lysine isopeptide (Lys-Gly) (interchain with G-Cter in SUMO) cross-link involves residue Lys-492. A helical membrane pass occupies residues 510-530 (APVSFLLKILGLLAVVLAFFF).

The protein belongs to the FMO family. FAD serves as cofactor. Requires Mg(2+) as cofactor.

The protein resides in the microsome membrane. It localises to the endoplasmic reticulum membrane. In terms of biological role, catalyzes the oxidative metabolism of numerous xenobiotics, including mainly therapeutic drugs and insecticides that contain a soft nucleophile, most commonly nitrogen and sulfur and participates to their bioactivation. Catalyzes the S-oxygenation of the prodrug ethionamide (ETA) to the S-oxide (ETASO), the first step in its bioactivation following by the second oxygenation to the sulfinic acid but to a lesser extend. This chain is Dimethylaniline monooxygenase [N-oxide-forming] 2, found in Mus musculus (Mouse).